Consider the following 184-residue polypeptide: Lipid A acyltransferase PagP (184 aa).

A signal peptide spans 1-22 (MNIRHGIIAMSSTMLVPLAAEA). Residues His-57, Asp-100, and Ser-101 contribute to the active site.

The protein belongs to the lipid A palmitoyltransferase family. In terms of assembly, homodimer.

It localises to the cell outer membrane. It catalyses the reaction a lipid A + a 1,2-diacyl-sn-glycero-3-phosphocholine = a hepta-acyl lipid A + a 2-acyl-sn-glycero-3-phosphocholine. It carries out the reaction a lipid IVA + a 1,2-diacyl-sn-glycero-3-phosphocholine = a lipid IVB + a 2-acyl-sn-glycero-3-phosphocholine. The enzyme catalyses a lipid IIA + a 1,2-diacyl-sn-glycero-3-phosphocholine = a lipid IIB + a 2-acyl-sn-glycero-3-phosphocholine. Functionally, transfers a fatty acid residue from the sn-1 position of a phospholipid to the N-linked hydroxyfatty acid chain on the proximal unit of lipid A or its precursors. This chain is Lipid A acyltransferase PagP, found in Methylobacillus flagellatus (strain ATCC 51484 / DSM 6875 / VKM B-1610 / KT).